Consider the following 386-residue polypeptide: Methionyl-tRNA formyltransferase, mitochondrial (386 aa).

Belongs to the Fmt family.

It localises to the mitochondrion. It carries out the reaction L-methionyl-tRNA(fMet) + (6R)-10-formyltetrahydrofolate = N-formyl-L-methionyl-tRNA(fMet) + (6S)-5,6,7,8-tetrahydrofolate + H(+). Functionally, methionyl-tRNA formyltransferase that formylates methionyl-tRNA in mitochondria and is crucial for translation initiation. The polypeptide is Methionyl-tRNA formyltransferase, mitochondrial (Mtfmt) (Mus musculus (Mouse)).